Reading from the N-terminus, the 575-residue chain is Aspartate--tRNA ligase (575 aa).

An L-aspartate-binding site is contributed by glutamate 169. The aspartate stretch occupies residues 193-196; it reads QLFK. An L-aspartate-binding site is contributed by arginine 215. Residues 215-217 and glutamine 224 contribute to the ATP site; that span reads RDE. Histidine 438 is a binding site for L-aspartate. Glutamate 472 contributes to the ATP binding site. Arginine 479 provides a ligand contact to L-aspartate. 524–527 serves as a coordination point for ATP; sequence GLDR.

It belongs to the class-II aminoacyl-tRNA synthetase family. Type 1 subfamily. In terms of assembly, homodimer.

Its subcellular location is the cytoplasm. The enzyme catalyses tRNA(Asp) + L-aspartate + ATP = L-aspartyl-tRNA(Asp) + AMP + diphosphate. In terms of biological role, catalyzes the attachment of L-aspartate to tRNA(Asp) in a two-step reaction: L-aspartate is first activated by ATP to form Asp-AMP and then transferred to the acceptor end of tRNA(Asp). This Mycoplasma capricolum subsp. capricolum (strain California kid / ATCC 27343 / NCTC 10154) protein is Aspartate--tRNA ligase.